Here is a 417-residue protein sequence, read N- to C-terminus: Serine--tRNA ligase (417 aa).

An L-serine-binding site is contributed by 232–234; it reads TAE. Residues 263-265 and Val-279 each bind ATP; that span reads RRE. L-serine is bound at residue Glu-286. An ATP-binding site is contributed by 350–353; it reads EISS. Ser-385 provides a ligand contact to L-serine.

Belongs to the class-II aminoacyl-tRNA synthetase family. Type-1 seryl-tRNA synthetase subfamily. Homodimer. The tRNA molecule binds across the dimer.

It localises to the cytoplasm. It carries out the reaction tRNA(Ser) + L-serine + ATP = L-seryl-tRNA(Ser) + AMP + diphosphate + H(+). It catalyses the reaction tRNA(Sec) + L-serine + ATP = L-seryl-tRNA(Sec) + AMP + diphosphate + H(+). Its pathway is aminoacyl-tRNA biosynthesis; selenocysteinyl-tRNA(Sec) biosynthesis; L-seryl-tRNA(Sec) from L-serine and tRNA(Sec): step 1/1. Its function is as follows. Catalyzes the attachment of serine to tRNA(Ser). Is also able to aminoacylate tRNA(Sec) with serine, to form the misacylated tRNA L-seryl-tRNA(Sec), which will be further converted into selenocysteinyl-tRNA(Sec). This is Serine--tRNA ligase from Leptospira borgpetersenii serovar Hardjo-bovis (strain JB197).